Here is a 312-residue protein sequence, read N- to C-terminus: Very long chain fatty acid elongase 4 (312 aa).

Residue N20 is glycosylated (N-linked (GlcNAc...) asparagine). 7 consecutive transmembrane segments (helical) span residues 42–62 (LMQS…FVWL), 78–98 (VLII…RELF), 127–147 (ALWW…FFIL), 165–185 (MFTL…FFGA), 188–208 (NSFI…GPWI), 217–237 (YLTM…ALSL), and 246–266 (WMHW…LNFY). The span at 273-292 (PKQSKTGKTATNGISSNGVN) shows a compositional bias: polar residues. The disordered stretch occupies residues 273–312 (PKQSKTGKTATNGISSNGVNKSEKALENGKPQKNGKPKGE). A glycan (N-linked (GlcNAc...) asparagine) is linked at N292. Positions 308-312 (KPKGE) match the Di-lysine motif motif.

It belongs to the ELO family. ELOVL4 subfamily. Oligomer. In terms of processing, N-glycosylated. Expressed in the retina, exclusively in photoreceptor cells and in the brain, skin, testis and lens.

The protein resides in the endoplasmic reticulum membrane. It carries out the reaction a very-long-chain acyl-CoA + malonyl-CoA + H(+) = a very-long-chain 3-oxoacyl-CoA + CO2 + CoA. It catalyses the reaction hexacosanoyl-CoA + malonyl-CoA + H(+) = 3-oxooctacosanyol-CoA + CO2 + CoA. The enzyme catalyses octacosanoyl-CoA + malonyl-CoA + H(+) = 3-oxo-triacontanoyl-CoA + CO2 + CoA. The catalysed reaction is triacontanoyl-CoA + malonyl-CoA + H(+) = 3-oxo-dotriacontanoyl-CoA + CO2 + CoA. It carries out the reaction (19Z,22Z,25Z,28Z,31Z)-tetratriacontapentaenoyl-CoA + malonyl-CoA + H(+) = 3-oxo-(21Z,24Z,27Z,30Z,33Z)-hexatriacontapentaenoyl-CoA + CO2 + CoA. It catalyses the reaction (4Z,7Z,10Z,13Z,16Z,19Z)-docosahexaenoyl-CoA + malonyl-CoA + H(+) = 3-oxo-(6Z,9Z,12Z,15Z,18Z,21Z)-tetracosahexaenoyl-CoA + CO2 + CoA. The enzyme catalyses (7Z,10Z,13Z,16Z)-docosatetraenoyl-CoA + malonyl-CoA + H(+) = (9Z,12Z,15Z,18Z)-3-oxotetracosatetraenoyl-CoA + CO2 + CoA. The catalysed reaction is (11Z,14Z,17Z,20Z,23Z)-hexacosapentaenoyl-CoA + malonyl-CoA + H(+) = 3-oxo-(13Z,16Z,19Z,22Z,25Z)-octacosapentaenoyl-CoA + CO2 + CoA. It carries out the reaction (13Z,16Z,19Z,22Z,25Z)-octacosapentaenoyl-CoA + malonyl-CoA + H(+) = 3-oxo-(15Z,18Z,21Z,24Z,27Z)-triacontapentaenoyl-CoA + CO2 + CoA. It catalyses the reaction (15Z,18Z,21Z,24Z,27Z)-triacontapentaenoyl-CoA + malonyl-CoA + H(+) = 3-oxo-(17Z,20Z,23Z,26Z,29Z)-dotriacontapentaenoyl-CoA + CO2 + CoA. The enzyme catalyses (17Z,20Z,23Z,26Z,29Z)-dotriacontapentaenoyl-CoA + malonyl-CoA + H(+) = 3-oxo-(19Z,22Z,25Z,28Z,31Z)-tetratriacontapentaenoyl-CoA + CO2 + CoA. The catalysed reaction is (21Z,24Z,27Z,30Z,33Z)-hexatriacontapentaenoyl-CoA + malonyl-CoA + H(+) = 3-oxo-(23Z,26Z,29Z,32Z,35Z)-octatriacontapentaenoyl-CoA + CO2 + CoA. It carries out the reaction (11Z,14Z,17Z,20Z)-hexacosatetraenoyl-CoA + malonyl-CoA + H(+) = (13Z,16Z,19Z,22Z)-3-oxooctacosatetraenoyl-CoA + CO2 + CoA. It catalyses the reaction (13Z,16Z,19Z,22Z)-octacosatetraenoyl-CoA + malonyl-CoA + H(+) = 3-oxo-(15Z,18Z,21Z,24Z)-triacontatetraenoyl-CoA + CO2 + CoA. The enzyme catalyses (15Z,18Z,21Z,24Z)-triacontatetraenoyl-CoA + malonyl-CoA + H(+) = 3-oxo-(17Z,20Z,23Z,26Z)-dotriacontatetraenoyl-CoA + CO2 + CoA. The catalysed reaction is (17Z,20Z,23Z,26Z)-dotriacontatetraenoyl-CoA + malonyl-CoA + H(+) = 3-oxo-(19Z,22Z,25Z,28Z)-tetratriacontatetraenoyl-CoA + CO2 + CoA. It carries out the reaction (19Z,22Z,25Z,28Z)-tetratriacontatetraenoyl-CoA + malonyl-CoA + H(+) = 3-oxo-(21Z,24Z,27Z,30Z)-hexatriacontatetraenoyl-CoA + CO2 + CoA. It catalyses the reaction (21Z,24Z,27Z,30Z)-hexatriacontatetraenoyl-CoA + malonyl-CoA + H(+) = 3-oxo-(23Z,26Z,29Z,32Z)-octatriacontatetraenoyl-CoA + CO2 + CoA. The enzyme catalyses (6Z,9Z,12Z,15Z,18Z,21Z)-tetracosahexaenoyl-CoA + malonyl-CoA + H(+) = 3-oxo-(8Z,11Z,14Z,17Z,20Z,23Z)-hexacosahexaenoyl-CoA + CO2 + CoA. The catalysed reaction is (8Z,11Z,14Z,17Z,20Z,23Z)-hexacosahexaenoyl-CoA + malonyl-CoA + H(+) = 3-oxo-(10Z,13Z,16Z,19Z,22Z,25Z)-octacosahexaenoyl-CoA + CO2 + CoA. It carries out the reaction (10Z,13Z,16Z,19Z,22Z,25Z)-octacosahexaenoyl-CoA + malonyl-CoA + H(+) = 3-oxo-(12Z,15Z,18Z,21Z,24Z,27Z)-triacontahexaenoyl-CoA + CO2 + CoA. It catalyses the reaction (12Z,15Z,18Z,21Z,24Z,27Z)-triacontahexaenoyl-CoA + malonyl-CoA + H(+) = 3-oxo-(14Z,17Z,20Z,23Z,26Z,29Z)-dotriacontahexaenoyl-CoA + CO2 + CoA. The enzyme catalyses (14Z,17Z,20Z,23Z,26Z,29Z)-dotriacontahexaenoyl-CoA + malonyl-CoA + H(+) = 3-oxo-(16Z,19Z,22Z,25Z,28Z,31Z)-tetratriacontahexaenoyl-CoA + CO2 + CoA. The catalysed reaction is (16Z,19Z,22Z,25Z,28Z,31Z)-tetratriacontahexaenoyl-CoA + malonyl-CoA + H(+) = 3-oxo-(18Z,21Z,24Z,27Z,30Z,33Z)-hexatriacontahexaenoyl-CoA + CO2 + CoA. It carries out the reaction (9Z,12Z,15Z,18Z,21Z)-tetracosapentaenoyl-CoA + malonyl-CoA + H(+) = 3-oxo-(11Z,14Z,17Z,20Z,23Z)-hexacosapentaenoyl-CoA + CO2 + CoA. Its pathway is lipid metabolism; fatty acid biosynthesis. Catalyzes the first and rate-limiting reaction of the four reactions that constitute the long-chain fatty acids elongation cycle. This endoplasmic reticulum-bound enzymatic process allows the addition of 2 carbons to the chain of long- and very long-chain fatty acids (VLCFAs) per cycle. Condensing enzyme that catalyzes the synthesis of very long chain saturated (VLC-SFA) and polyunsaturated (PUFA) fatty acids that are involved in multiple biological processes as precursors of membrane lipids and lipid mediators. May play a critical role in early brain and skin development. This chain is Very long chain fatty acid elongase 4, found in Mus musculus (Mouse).